A 603-amino-acid chain; its full sequence is uncharacterized protein (603 aa).

In terms of domain architecture, Ubiquitin-like spans Tyr4–Phe79. 3 disordered regions span residues Thr85–Leu121, Ser159–Ser178, and Ala206–Phe348. Composition is skewed to polar residues over residues Val94–Asn117 and Thr162–Ser178. A compositionally biased stretch (low complexity) spans Ser219 to Pro231. Residues Leu246–Leu264 are compositionally biased toward polar residues. The segment covering Ser280–Ser289 has biased composition (low complexity). Positions Ile290–Gly314 are enriched in polar residues. Residues Pro315 to Pro329 show a composition bias toward low complexity. Positions Ala330 to Phe348 are enriched in polar residues. A helical membrane pass occupies residues Ile496–Phe516. A disordered region spans residues Thr544–Leu578. Phosphothreonine is present on Thr566. Residues Asn569–Leu578 show a composition bias toward basic and acidic residues.

The protein localises to the endoplasmic reticulum membrane. This is an uncharacterized protein from Schizosaccharomyces pombe (strain 972 / ATCC 24843) (Fission yeast).